The primary structure comprises 380 residues: Protein Wnt-5a (380 aa).

The N-terminal stretch at 1–37 is a signal peptide; that stretch reads MKKPIGILSPGVALGTAGGAMSSKFFLMALATFFSFA. Residues 38–61 constitute a propeptide that is removed on maturation; sequence QVVIEANSWWSLGMNNPVQMSEVH. A disulfide bond links Cys104 and Cys115. Residues Asn114 and Asn120 are each glycosylated (N-linked (GlcNAc...) asparagine). 10 disulfide bridges follow: Cys154–Cys162, Cys164–Cys182, Cys238–Cys252, Cys240–Cys247, Cys309–Cys340, Cys325–Cys335, Cys339–Cys379, Cys355–Cys370, Cys357–Cys367, and Cys362–Cys363. The O-palmitoleoyl serine; by PORCN moiety is linked to residue Ser244. Asn312 and Asn326 each carry an N-linked (GlcNAc...) asparagine glycan.

Belongs to the Wnt family. In terms of assembly, forms a soluble 1:1 complex with AFM; this prevents oligomerization and is required for prolonged biological activity. The complex with AFM may represent the physiological form in body fluids. Homooligomer; disulfide-linked, leading to inactivation (in vitro). Interacts with PORCN. Interacts with WLS. Interacts with glypican GCP3. Interacts with PKD1 (via extracellular domain). Interacts with TMEM67. In terms of processing, glycosylation is necessary for secretion but not for activity. Palmitoleoylation is required for efficient binding to frizzled receptors. Depalmitoleoylation leads to Wnt signaling pathway inhibition. Post-translationally, proteolytic processing by TIKI1 and TIKI2 promotes oxidation and formation of large disulfide-bond oligomers, leading to inactivation of WNT5A.

It is found in the secreted. The protein localises to the extracellular space. It localises to the extracellular matrix. In terms of biological role, ligand for members of the frizzled family of seven transmembrane receptors. Can activate or inhibit canonical Wnt signaling, depending on receptor context. In the presence of FZD4, activates beta-catenin signaling. In the presence of ROR2, inhibits the canonical Wnt pathway by promoting beta-catenin degradation through a GSK3-independent pathway which involves down-regulation of beta-catenin-induced reporter gene expression. Suppression of the canonical pathway allows chondrogenesis to occur and inhibits tumor formation. Stimulates cell migration. Decreases proliferation, migration, invasiveness and clonogenicity of carcinoma cells and may act as a tumor suppressor. Mediates motility of melanoma cells. Required during embryogenesis for extension of the primary anterior-posterior axis and for outgrowth of limbs and the genital tubercle. Inhibits type II collagen expression in chondrocytes. The sequence is that of Protein Wnt-5a (Wnt5a) from Rattus norvegicus (Rat).